A 384-amino-acid polypeptide reads, in one-letter code: Outer membrane protein assembly factor BamB (384 aa).

An N-terminal signal peptide occupies residues 1 to 16 (MKIRILVLILCALTQG). C17 carries N-palmitoyl cysteine lipidation. C17 is lipidated: S-diacylglycerol cysteine.

Belongs to the BamB family. As to quaternary structure, part of the Bam complex.

It localises to the cell outer membrane. Its function is as follows. Part of the outer membrane protein assembly complex, which is involved in assembly and insertion of beta-barrel proteins into the outer membrane. The sequence is that of Outer membrane protein assembly factor BamB from Legionella pneumophila (strain Paris).